The sequence spans 404 residues: Phosphoglycerate kinase (404 aa).

Substrate contacts are provided by residues 22–24 (DLN), R37, 60–63 (HLGR), R119, and R156. ATP contacts are provided by residues K206, G302, E333, and 359-362 (GGDS).

This sequence belongs to the phosphoglycerate kinase family. In terms of assembly, monomer.

The protein localises to the cytoplasm. The enzyme catalyses (2R)-3-phosphoglycerate + ATP = (2R)-3-phospho-glyceroyl phosphate + ADP. It functions in the pathway carbohydrate degradation; glycolysis; pyruvate from D-glyceraldehyde 3-phosphate: step 2/5. In Clavibacter michiganensis subsp. michiganensis (strain NCPPB 382), this protein is Phosphoglycerate kinase.